The sequence spans 500 residues: Protein farnesyltransferase subunit beta (500 aa).

The tract at residues 117-140 (LQNDDNNGNNNNRENNQNGGGFGG) is disordered. A compositionally biased stretch (low complexity) spans 119–133 (NDDNNGNNNNRENNQ). 5 PFTB repeats span residues 121–162 (DNNG…YVIG), 172–213 (REAM…SMLN), 220–261 (ERGV…SILN), 268–309 (MNSL…IIIQ), and 343–384 (QEYV…SLSQ). Residues 246 to 249 (HGGY) and 288 to 291 (RTNK) each bind (2E,6E)-farnesyl diphosphate. Residues Asp-294 and Cys-296 each contribute to the Zn(2+) site. (2E,6E)-farnesyl diphosphate is bound at residue 297 to 300 (YSYW). Position 372 (His-372) interacts with Zn(2+). Residues 402-451 (FEQPSPPINKKSTNVFTISNNNNNNNNKNNNSDDNNNNSNNNNNNSENQL) form a disordered region. A compositionally biased stretch (low complexity) spans 420–449 (SNNNNNNNNKNNNSDDNNNNSNNNNNNSEN).

It belongs to the protein prenyltransferase subunit beta family. As to quaternary structure, heterodimer of fntA and fntB (farnesyltransferase). Heterodimer of an alpha and a beta subunit. The cofactor is Zn(2+).

The enzyme catalyses L-cysteinyl-[protein] + (2E,6E)-farnesyl diphosphate = S-(2E,6E)-farnesyl-L-cysteinyl-[protein] + diphosphate. Catalyzes the transfer of a farnesyl moiety from farnesyl diphosphate to a cysteine at the fourth position from the C-terminus of several proteins. The beta subunit is responsible for peptide-binding. In Dictyostelium discoideum (Social amoeba), this protein is Protein farnesyltransferase subunit beta (fntB).